Consider the following 107-residue polypeptide: Nucleoid-associated protein NE0434 (107 aa).

This sequence belongs to the YbaB/EbfC family. As to quaternary structure, homodimer.

The protein localises to the cytoplasm. The protein resides in the nucleoid. Functionally, binds to DNA and alters its conformation. May be involved in regulation of gene expression, nucleoid organization and DNA protection. The protein is Nucleoid-associated protein NE0434 of Nitrosomonas europaea (strain ATCC 19718 / CIP 103999 / KCTC 2705 / NBRC 14298).